Reading from the N-terminus, the 452-residue chain is UDP-N-acetylmuramoylalanine--D-glutamate ligase (452 aa).

Residue 119–125 coordinates ATP; the sequence is GSNGKTT.

The protein belongs to the MurCDEF family.

It localises to the cytoplasm. The catalysed reaction is UDP-N-acetyl-alpha-D-muramoyl-L-alanine + D-glutamate + ATP = UDP-N-acetyl-alpha-D-muramoyl-L-alanyl-D-glutamate + ADP + phosphate + H(+). It functions in the pathway cell wall biogenesis; peptidoglycan biosynthesis. Cell wall formation. Catalyzes the addition of glutamate to the nucleotide precursor UDP-N-acetylmuramoyl-L-alanine (UMA). The polypeptide is UDP-N-acetylmuramoylalanine--D-glutamate ligase (Streptococcus pyogenes serotype M12 (strain MGAS9429)).